The chain runs to 149 residues: Large ribosomal subunit protein bL9 (149 aa).

This sequence belongs to the bacterial ribosomal protein bL9 family.

Its function is as follows. Binds to the 23S rRNA. This chain is Large ribosomal subunit protein bL9, found in Anaeromyxobacter dehalogenans (strain 2CP-C).